A 218-amino-acid polypeptide reads, in one-letter code: UPF0711 protein C18orf21 homolog (218 aa).

Position 126 is a phosphoserine (S126). Low complexity predominate over residues 130 to 146 (ASAASKASPKTPKRAAA). The segment at 130 to 192 (ASAASKASPK…NGSKRKKHFS (63 aa)) is disordered. T140 is modified (phosphothreonine). A compositionally biased stretch (polar residues) spans 147–156 (GSTNISQSVH). Positions 161–172 (RSPSSTVRTPTS) are enriched in low complexity. Residues 173–183 (GQSTPICSSRN) are compositionally biased toward polar residues.

This sequence belongs to the UPF0711 family.

This chain is UPF0711 protein C18orf21 homolog, found in Rattus norvegicus (Rat).